The primary structure comprises 188 residues: NADH-quinone oxidoreductase subunit B (188 aa).

Residues Cys-67, Cys-68, Cys-132, and Cys-162 each coordinate [4Fe-4S] cluster.

Belongs to the complex I 20 kDa subunit family. NDH-1 is composed of 14 different subunits. Subunits NuoB, C, D, E, F, and G constitute the peripheral sector of the complex. [4Fe-4S] cluster serves as cofactor.

The protein localises to the cell inner membrane. The catalysed reaction is a quinone + NADH + 5 H(+)(in) = a quinol + NAD(+) + 4 H(+)(out). Its function is as follows. NDH-1 shuttles electrons from NADH, via FMN and iron-sulfur (Fe-S) centers, to quinones in the respiratory chain. Couples the redox reaction to proton translocation (for every two electrons transferred, four hydrogen ions are translocated across the cytoplasmic membrane), and thus conserves the redox energy in a proton gradient. This chain is NADH-quinone oxidoreductase subunit B, found in Maricaulis maris (strain MCS10) (Caulobacter maris).